Here is a 78-residue protein sequence, read N- to C-terminus: Mitochondrial import inner membrane translocase subunit Tim9 (78 aa).

Residues 24–48 carry the Twin CX3C motif motif; that stretch reads CFTSCVNEFGSRTVNAKEESCANNC. 2 disulfide bridges follow: Cys-24–Cys-48 and Cys-28–Cys-44.

This sequence belongs to the small Tim family. In terms of assembly, heterohexamer; composed of 3 copies of tim-9/tin-9.1 and 3 copies of tim-10/tin-10, named soluble 70 kDa complex. The complex associates with the tim-22 component of the TIM22 complex. Interacts with multi-pass transmembrane proteins in transit.

The protein resides in the mitochondrion inner membrane. In terms of biological role, mitochondrial intermembrane chaperone that participates in the import and insertion of multi-pass transmembrane proteins into the mitochondrial inner membrane. May also be required for the transfer of beta-barrel precursors from the TOM complex to the sorting and assembly machinery (SAM complex) of the outer membrane. Acts as a chaperone-like protein that protects the hydrophobic precursors from aggregation and guide them through the mitochondrial intermembrane space. The sequence is that of Mitochondrial import inner membrane translocase subunit Tim9 (tin-9.1) from Caenorhabditis briggsae.